Reading from the N-terminus, the 101-residue chain is Ubiquitin-related modifier 1 homolog (101 aa).

Glycine 101 is modified (1-thioglycine). Glycine 101 participates in a covalent cross-link: Glycyl lysine isopeptide (Gly-Lys) (interchain with K-? in acceptor proteins).

This sequence belongs to the URM1 family. In terms of assembly, interacts with cer. Post-translationally, C-terminal thiocarboxylation occurs in 2 steps, it is first acyl-adenylated (-COAMP) via the hesA/moeB/thiF part of the MOCS3 homolog, then thiocarboxylated (-COSH) via the rhodanese domain of the MOCS3 homolog.

Its subcellular location is the cytoplasm. The protein operates within tRNA modification; 5-methoxycarbonylmethyl-2-thiouridine-tRNA biosynthesis. Functionally, acts as a sulfur carrier required for 2-thiolation of mcm(5)S(2)U at tRNA wobble positions of cytosolic tRNA(Lys), tRNA(Glu) and tRNA(Gln). Serves as sulfur donor in tRNA 2-thiolation reaction by being thiocarboxylated (-COSH) at its C-terminus by MOCS3. The sulfur is then transferred to tRNA to form 2-thiolation of mcm(5)S(2)U. Also acts as a ubiquitin-like protein (UBL) that is covalently conjugated via an isopeptide bond to lysine residues of target proteins such as Prx2/Jafrac1, Ciao1, Eip71CD and GILT1. The thiocarboxylated form serves as substrate for conjugation and oxidative stress specifically induces the formation of UBL-protein conjugates. The protein is Ubiquitin-related modifier 1 homolog of Drosophila ananassae (Fruit fly).